Reading from the N-terminus, the 358-residue chain is L-tryptophan methyltransferase trpM (358 aa).

The protein belongs to the methyltransferase superfamily.

It carries out the reaction L-tryptophan + S-adenosyl-L-methionine = N(alpha)-methyl-L-tryptophan + S-adenosyl-L-homocysteine + H(+). It catalyses the reaction N(alpha)-methyl-L-tryptophan + S-adenosyl-L-methionine = N(alpha),N(alpha)-dimethyl-L-tryptophan + S-adenosyl-L-homocysteine + H(+). The enzyme catalyses N(alpha),N(alpha)-dimethyl-L-tryptophan + S-adenosyl-L-methionine = N(alpha),N(alpha),N(alpha)-trimethyl-L-tryptophan + S-adenosyl-L-homocysteine + H(+). In terms of biological role, methyltransferase that catalyzes iterative L-tryptophan N-methylations to produce L-abrine (N-alpha-methyl-L-tryptophan) and N,N-alpha-dimethyl-L-tryptophan. Also catalyzes a third methylation to yield L-hypaphorine (N,N,N-alpha-trimethyl-L-tryptopan), an agonist of the phytohormone indole-3-acetic acid. Can also N-methylate the non-native amino acid substrate 4-hydroxytryptophan, but the ability to incorporate trpM into a functional psilocybin biosynthesis pathway is indeed thwarted by the inability of the L-tryptophan decarboxylase psiD to use N,N-dimethyl-4-hydroxytryptophan as substrate. The protein is L-tryptophan methyltransferase trpM of Psilocybe serbica.